Reading from the N-terminus, the 362-residue chain is Chorismate synthase (362 aa).

Arg47 lines the NADP(+) pocket. Residues 124 to 126 (RSS), Gly286, 301 to 305 (KPTAT), and Arg327 each bind FMN.

The protein belongs to the chorismate synthase family. As to quaternary structure, homotetramer. It depends on FMNH2 as a cofactor.

It carries out the reaction 5-O-(1-carboxyvinyl)-3-phosphoshikimate = chorismate + phosphate. It functions in the pathway metabolic intermediate biosynthesis; chorismate biosynthesis; chorismate from D-erythrose 4-phosphate and phosphoenolpyruvate: step 7/7. In terms of biological role, catalyzes the anti-1,4-elimination of the C-3 phosphate and the C-6 proR hydrogen from 5-enolpyruvylshikimate-3-phosphate (EPSP) to yield chorismate, which is the branch point compound that serves as the starting substrate for the three terminal pathways of aromatic amino acid biosynthesis. This reaction introduces a second double bond into the aromatic ring system. This chain is Chorismate synthase, found in Gloeothece citriformis (strain PCC 7424) (Cyanothece sp. (strain PCC 7424)).